Reading from the N-terminus, the 258-residue chain is UBX domain-containing protein 2A (258 aa).

Positions 1–152 are required for interaction with CHRNA3; the sequence is MKEVDNLDSI…SATPRIVSKA (152 aa). A required for inhibition of CHRNA3 ubiquitination and translocation of CHRNA3 to the plasma membrane resulting in an increase in acetylcholine-gated nicotinic acetylcholine receptor currents region spans residues 1–165; it reads MKEVDNLDSI…EVDNKSTLSA (165 aa). One can recognise an SEP domain in the interval 61 to 125; the sequence is QVDVNIKLWK…VEDKKNEVCM (65 aa). Residues 168-258 are required for interaction with VCP; sequence LNNLEPITRI…QKTAEPFRKL (91 aa). The 78-residue stretch at 170-247 folds into the UBX domain; the sequence is NLEPITRIQI…DLQNAVIIQR (78 aa).

In terms of assembly, part of a complex composed of STUB1/CHIP, VCP/p97, CHRNA3, and UBXN2A that modulates the ubiquitination and endoplasmic reticulum-associated degradation (ERAD) of CHRNA3. Within the complex UBXN2A acts as a scaffold protein required for the interaction of CHRNA3 with VCP/p97, this interaction also inhibits CHRNA3 ubiquitination by STUB1/CHIP and subsequently ERAD. Interacts (via SEP domain) with CHRNA3 and interacts (via UBX domain) with VCP/P97; these interactions are required for the interaction of CHRNA3 with the STUB1-VCP-UBXN2A complex. Interacts with HSPA9/MOT-2 (via SBD domain); the interaction inhibits HSPA9/MOT-2 interaction with and degradation of p53, thereby promotes p53 translocation to the nucleus. Interacts with RICTOR. Ubiquitinated.

The protein localises to the golgi apparatus. It localises to the endoplasmic reticulum. Its subcellular location is the perikaryon. The protein resides in the cell projection. It is found in the dendrite. The protein localises to the nucleus. It localises to the cytoplasm. Acts to repress the ubiquitination and subsequent endoplasmic reticulum-associated degradation of CHRNA3 by the STUB1-VCP-UBXN2A complex in cortical neurons. Also acts to promote the translocation of CHRNA3 to the plasma membrane and subsequently increases plasma membrane acetylcholine-gated ion-channel activation. Plays a role in the inhibition of STUB1-mediated TP53 degradation, via its interaction with HSPA9 which acts to inhibit TP53 binding to HSPA9. Positively mediates the ubiquitination and proteosomal degradation of RICTOR, may thereby act as a negative regulator of the mTORC2 pathway. The polypeptide is UBX domain-containing protein 2A (Rattus norvegicus (Rat)).